A 92-amino-acid chain; its full sequence is MTQVCIAAYVYGVVQGVGFRYNTQHQATALGLSGYARNLDDGSVEVLACGEQPQVDKLVEWLKNGGPRSARVDRVLVEPRGAADFQGFSIRY.

The 88-residue stretch at 5-92 folds into the Acylphosphatase-like domain; sequence CIAAYVYGVV…ADFQGFSIRY (88 aa). Active-site residues include Arg-20 and Asn-38.

The protein belongs to the acylphosphatase family.

It catalyses the reaction an acyl phosphate + H2O = a carboxylate + phosphate + H(+). This is Acylphosphatase (acyP) from Serratia proteamaculans (strain 568).